The sequence spans 117 residues: Ig heavy chain V region 1-72 (117 aa).

The signal sequence occupies residues M1 to S19. The interval Q20–T49 is framework-1. C41 and C115 are disulfide-bonded. Residues S50–H54 form a complementarity-determining-1 region. The framework-2 stretch occupies residues W55 to G68. The interval R69 to S85 is complementarity-determining-2. A framework-3 region spans residues K86 to R117.

This chain is Ig heavy chain V region 1-72, found in Mus musculus (Mouse).